Consider the following 194-residue polypeptide: Holliday junction branch migration complex subunit RuvA (194 aa).

Residues 1–64 are domain I; that stretch reads MISRLTGKLV…EDAHLLFGFA (64 aa). Residues 65-143 are domain II; the sequence is TAEERKTFRQ…AHAVTDGLFA (79 aa). Residues 144-147 form a flexible linker region; sequence AAPA. The segment at 147 to 194 is domain III; sequence AADETEDIVGTLLALGYSEREAKAAVKGVPEGTDVGEGVRLALKNLLK.

This sequence belongs to the RuvA family. As to quaternary structure, homotetramer. Forms an RuvA(8)-RuvB(12)-Holliday junction (HJ) complex. HJ DNA is sandwiched between 2 RuvA tetramers; dsDNA enters through RuvA and exits via RuvB. An RuvB hexamer assembles on each DNA strand where it exits the tetramer. Each RuvB hexamer is contacted by two RuvA subunits (via domain III) on 2 adjacent RuvB subunits; this complex drives branch migration. In the full resolvosome a probable DNA-RuvA(4)-RuvB(12)-RuvC(2) complex forms which resolves the HJ.

The protein resides in the cytoplasm. Functionally, the RuvA-RuvB-RuvC complex processes Holliday junction (HJ) DNA during genetic recombination and DNA repair, while the RuvA-RuvB complex plays an important role in the rescue of blocked DNA replication forks via replication fork reversal (RFR). RuvA specifically binds to HJ cruciform DNA, conferring on it an open structure. The RuvB hexamer acts as an ATP-dependent pump, pulling dsDNA into and through the RuvAB complex. HJ branch migration allows RuvC to scan DNA until it finds its consensus sequence, where it cleaves and resolves the cruciform DNA. In Neisseria meningitidis serogroup A / serotype 4A (strain DSM 15465 / Z2491), this protein is Holliday junction branch migration complex subunit RuvA.